A 971-amino-acid chain; its full sequence is MSTTSIQHFTSSFSPFSSGTQPVGMAQSQTVGLDTLAEGSQYALEQLQLSREANGASAVDGGVPNPLRSSISKPQGQQLYSDESSAQHTQNATTGFRNLPQRDQLAEARSTIRKSSNSGPVRRRISRACDQCNQLRTKCDGQNPCAHCIEFGLTCEYARERKKRGKASKKDLAAAAAAVANNGTAPTSNGNTSNDSVSSAKRHTPSDGQSTQEVSGRYDPNFDASRNLATAGQSQLGQHSDMSGMAGMQGSQQTPHSQPSLGGAIDAIHLNHFNTLNDSNRPQMSVPDLRSLQMLHPSGANTRSPSGALPPQGMNSGYNDGAYSLMNASEANHPSINQYRLGNSAENPPAPFLGLSPPAQSPGWLSLPSPSPANFASFSMPPFSSTLRYPVLQPVLPHIASIIPQSLACDLLDVYFTSFSPSHLSPQSPYVVGYIFRKQSFLHPTKPRVCSPGLLASMLWVAAQTSDAAFLTSPPSARGRVCQKLLELTVGLLRPLIHGPAPGETSPNYAANMVINGVALGGFGVSMDQLGAQSSATGAVDDVATYVHLATVISASEYKAASMRWWTAAWSLARELKLGRELPPNAPQPRQDGEPEDDTDVDMSKRNLPPLITSVGGNSGSTILNVTEEEREERRRLWWLLYATDRHLALCYNRPLTLLDKECEGLLQPMNDDLWQAGDFAGATYRQVGPQVECTGHSMFGFFLPLMTILGEIVDLQQAKEHPRFGRVFRNSADWDHQVLEITRQLDTYAQSLKEFEARYTSSLALGAGESEAAIEGSHLDHVSPSGRSTSTAGSRVNESIVHTKMVVAYGTHIMHVLHVLLAGKWDPINLLEDHDLWISSESFIAAMSHAVGAADAAADILEYDPDITFMPFFFGIYLLQGSFLLLLAADKLQGDVSPSVVRACETIVRAHEACVVTLNTEYQRTFRKVMRSALAQVRGRMPEDFGEQQQRRREVLALYRWTGDGSGLAL.

Disordered stretches follow at residues 1–25 (MSTT…PVGM) and 55–123 (GASA…PVRR). Positions 9–18 (FTSSFSPFSS) are enriched in low complexity. Positions 67-96 (LRSSISKPQGQQLYSDESSAQHTQNATTGF) are enriched in polar residues. The segment at residues 129–155 (CDQCNQLRTKCDGQNPCAHCIEFGLTC) is a DNA-binding region (zn(2)-C6 fungal-type). 3 stretches are compositionally biased toward polar residues: residues 182–199 (NGTA…SVSS), 227–241 (NLAT…QHSD), and 249–260 (QGSQQTPHSQPS). Disordered stretches follow at residues 182 to 263 (NGTA…SLGG), 295 to 316 (LHPS…GMNS), and 580 to 610 (RELP…NLPP).

It belongs to the xlnR/xlr1 family.

The protein resides in the nucleus. Functionally, transcriptional activator of the xylanolytic system. Involved in the regulation of extracellular cellulolytic and xylanolytic genes and in the regulation of the intracellular activities of D-xylose catabolic genes in the pentose catabolic pathway (PCP) in response to the presence of D-xylose. In Aspergillus flavus (strain ATCC 200026 / FGSC A1120 / IAM 13836 / NRRL 3357 / JCM 12722 / SRRC 167), this protein is Xylanolytic transcriptional activator xlnR (xlnR).